An 86-amino-acid chain; its full sequence is MENFDKTMKFNYDEIPKEDVKTVLQNVYHTLEERGYNPVNQIVGYLLSGDPAYIPRNNEARNQIRRIDRDDIMEELVSNYLQEKSN.

This sequence belongs to the UPF0297 family.

The polypeptide is UPF0297 protein SSP1144 (Staphylococcus saprophyticus subsp. saprophyticus (strain ATCC 15305 / DSM 20229 / NCIMB 8711 / NCTC 7292 / S-41)).